The following is a 765-amino-acid chain: Putative chloride channel-like protein CLC-g (765 aa).

A run of 12 helical transmembrane segments spans residues 67–87, 116–136, 167–187, 190–210, 232–252, 262–282, 315–335, 355–375, 438–458, 462–482, 494–514, and 515–535; these read VFMK…IGFA, FVVF…ITAF, LIIK…IGKA, MVHT…KRYR, GAAA…LFAL, ALLW…RALI, VLPV…YNFL, ILLA…LPFL, FSVL…YGIV, GLFV…GMLL, AVLG…STCV, and ILLE…VLLI. The CBS 1 domain maps to 568-640; that stretch reads MRQLLVGDVV…LLKKRVFMPS (73 aa). Phosphoserine is present on serine 646. The region spanning 687–748 is the CBS 2 domain; that stretch reads FSNASPYTVV…PEHILGLHPS (62 aa). Residues 715-735 form a helical membrane-spanning segment; the sequence is HLLVIPKTSNRPPVVGILTRH.

Belongs to the chloride channel (TC 2.A.49) family. Homodimer. Interacts with PP2A5.

Its subcellular location is the membrane. Functionally, putative voltage-gated chloride channel. This Arabidopsis thaliana (Mouse-ear cress) protein is Putative chloride channel-like protein CLC-g (CLC-G).